The chain runs to 107 residues: U-scoloptoxin(18)-Er1a (107 aa).

The signal sequence occupies residues Met-1–Ala-21.

This sequence belongs to the scoloptoxin-18 family. Contains 5 disulfide bonds. As to expression, expressed by the venom gland.

The protein resides in the secreted. In Ethmostigmus rubripes (Giant centipede), this protein is U-scoloptoxin(18)-Er1a.